A 456-amino-acid chain; its full sequence is Chromosomal replication initiator protein DnaA (456 aa).

Residues 1 to 85 (MDADLNKLWE…EIKFIIESDL (85 aa)) are domain I, interacts with DnaA modulators. Positions 85 to 117 (LNNEDELNNSDNSDKNRDKNSRRNIVVNDEMSS) are domain II. Positions 118–334 (TLNPKYTFNS…GALIRIIAYS (217 aa)) are domain III, AAA+ region. ATP contacts are provided by Gly-162, Gly-164, Lys-165, and Thr-166. The segment at 335-456 (SLTNREVTVD…SDITKKVSQN (122 aa)) is domain IV, binds dsDNA.

The protein belongs to the DnaA family. Oligomerizes as a right-handed, spiral filament on DNA at oriC.

It is found in the cytoplasm. Functionally, plays an essential role in the initiation and regulation of chromosomal replication. ATP-DnaA binds to the origin of replication (oriC) to initiate formation of the DNA replication initiation complex once per cell cycle. Binds the DnaA box (a 9 base pair repeat at the origin) and separates the double-stranded (ds)DNA. Forms a right-handed helical filament on oriC DNA; dsDNA binds to the exterior of the filament while single-stranded (ss)DNA is stabiized in the filament's interior. The ATP-DnaA-oriC complex binds and stabilizes one strand of the AT-rich DNA unwinding element (DUE), permitting loading of DNA polymerase. After initiation quickly degrades to an ADP-DnaA complex that is not apt for DNA replication. Binds acidic phospholipids. The protein is Chromosomal replication initiator protein DnaA of Clostridium botulinum (strain Eklund 17B / Type B).